Consider the following 162-residue polypeptide: Peroxiredoxin-2D (162 aa).

Residues 4 to 162 form the Thioredoxin domain; the sequence is ITVGDVVPDG…SSAEDILKAL (159 aa). The active-site Cysteine sulfenic acid (-SOH) intermediate is the Cys-51.

It belongs to the peroxiredoxin family. Prx5 subfamily. In terms of assembly, monomer. As to expression, exclusively expressed in buds and flowers. Also detected in pollen.

It is found in the cytoplasm. The enzyme catalyses [glutaredoxin]-dithiol + a hydroperoxide = [glutaredoxin]-disulfide + an alcohol + H2O. Thiol-specific peroxidase that catalyzes the reduction of hydrogen peroxide and organic hydroperoxides to water and alcohols, respectively. Plays a role in cell protection against oxidative stress by detoxifying peroxides. May be involved in intracellular redox signaling. The polypeptide is Peroxiredoxin-2D (PRXIID) (Arabidopsis thaliana (Mouse-ear cress)).